Consider the following 315-residue polypeptide: Vomeronasal type-1 receptor 54 (315 aa).

Topologically, residues 1–15 are extracellular; sequence MNKMNRLSHNTEIRN. The chain crosses the membrane as a helical span at residues 16–40; it reads AIYSGVGIGISGNSFLLLFHIFKYI. Residues 41–51 lie on the Cytoplasmic side of the membrane; it reads RGQRSRHIDLP. The chain crosses the membrane as a helical span at residues 52–71; sequence IGLLSLIHLVMLIAMSLVAT. Topologically, residues 72–90 are extracellular; it reads DIFMPWGRWGDTTCKCVIS. Cys-85 and Cys-172 are oxidised to a cystine. Residues 91–112 traverse the membrane as a helical segment; sequence LYRFCRSLSLCATSLLSILQAV. At 113–132 the chain is on the cytoplasmic side; it reads TLNPRNSCLEKFKRKSPHYM. A helical membrane pass occupies residues 133–154; that stretch reads LGCLLFLSVFYTFISSPLATYI. At 155–193 the chain is on the extracellular side; it reads TAKSNLTSPSFTYITTSCSLAPMSYSFHLTVFILLTSRD. A helical transmembrane segment spans residues 194-212; the sequence is VIFVGLMLLSSGYMVTFLG. At 213–239 the chain is on the cytoplasmic side; that stretch reads RHKKQSQFLHITSFSLKPSAEKRAMRT. Residues 240–260 traverse the membrane as a helical segment; that stretch reads ILCLMSFFVLMYTLDSIVSYI. Over 261–267 the chain is Extracellular; it reads RSIDDGQ. The helical transmembrane segment at 268–288 threads the bilayer; sequence IFYCVHIFTAHGYATVSPFLI. Topologically, residues 289–315 are cytoplasmic; sequence LSTEKYIINIFRSTFGRMVTIILLRNR.

This sequence belongs to the G-protein coupled receptor 1 family.

The protein localises to the cell membrane. Its function is as follows. Putative pheromone receptor implicated in the regulation of social and reproductive behavior. This Mus musculus (Mouse) protein is Vomeronasal type-1 receptor 54 (Vmn1r54).